The primary structure comprises 249 residues: Photosystem I-associated linker protein CpcL (249 aa).

The PBS-linker domain maps to 11–189 (VSQNQRVTNY…PRYGADHREK (179 aa)). Residues 223 to 247 (VVLYVGGALVSLGIIAVALSAWGII) traverse the membrane as a helical segment.

Belongs to the phycobilisome linker protein family. Part of a specialized phycobilisome (PBS), a structure that is usually composed of two distinct substructures: a core complex and a number of rods radiating from the core. This protein is part of a core-less PBS rod (called CpcL-PBS) with on average 5 stacked phycocyanin hexamers (PC, CpcA and CpcB). Linker CpcL connects the PC stack to the thylakoid, the hexamers are linked by 1 copy of CpcC1, 3 copies of CpcC2 and the stack is terminated by a single copy of CpcD. Ferredoxin--NADP reductase (petH) is also part of the complex. CpcL-PBS has no central core proteins (allophycocyanin ApcA, ApcB) nor phycobiliprotein ApcE.

The protein resides in the cellular thylakoid membrane. Its function is as follows. Rod linker protein, associated with phycocyanin. Linker polypeptides determine the state of aggregation and the location of the disk-shaped phycobiliprotein units within the phycobilisome and modulate their spectroscopic properties in order to mediate a directed and optimal energy transfer. Plays a role in energy transfer from the phycobilisome to photosystem I (PSI). Although able to transfer energy to both photosystems, this is predominantly a PSI antenna. The chain is Photosystem I-associated linker protein CpcL from Synechocystis sp. (strain ATCC 27184 / PCC 6803 / Kazusa).